The sequence spans 80 residues: Small ribosomal subunit protein bS21 (80 aa).

It belongs to the bacterial ribosomal protein bS21 family.

The chain is Small ribosomal subunit protein bS21 from Rhodospirillum rubrum (strain ATCC 11170 / ATH 1.1.1 / DSM 467 / LMG 4362 / NCIMB 8255 / S1).